Consider the following 553-residue polypeptide: Keratin, type II cytoskeletal 73 (553 aa).

Residues 1-130 (MNRQFTCKSG…DPEIQKVRAQ (130 aa)) are head. The coil 1A stretch occupies residues 131–166 (EREQIKALNNKFASFIDKVRFLEQQNQVLQTKWELL). One can recognise an IF rod domain in the interval 131–444 (EREQIKALNN…KLLEGEECRM (314 aa)). The interval 167–185 (QQLDLSNCRRNLEPVYEAH) is linker 1. Residues 186-277 (ISSLQKQLDS…CLYEGEITQM (92 aa)) are coil 1B. Positions 278-301 (QSHISDTSVVLSMDNNRNLDLDSI) are linker 12. Positions 302–440 (IAEVRAQYED…ATYRKLLEGE (139 aa)) are coil 2. The tail stretch occupies residues 441-539 (ECRMSGEHTN…LGSPSKKTMR (99 aa)).

Belongs to the intermediate filament family. As to quaternary structure, heterotetramer of two type I and two type II keratins.

Has a role in hair formation. Specific component of keratin intermediate filaments in the inner root sheath (IRS) of the hair follicle. The chain is Keratin, type II cytoskeletal 73 (Krt73) from Rattus norvegicus (Rat).